The following is a 358-amino-acid chain: UDP-3-O-acylglucosamine N-acyltransferase (358 aa).

The active-site Proton acceptor is the His-252.

It belongs to the transferase hexapeptide repeat family. LpxD subfamily. As to quaternary structure, homotrimer.

The catalysed reaction is a UDP-3-O-[(3R)-3-hydroxyacyl]-alpha-D-glucosamine + a (3R)-hydroxyacyl-[ACP] = a UDP-2-N,3-O-bis[(3R)-3-hydroxyacyl]-alpha-D-glucosamine + holo-[ACP] + H(+). Its pathway is bacterial outer membrane biogenesis; LPS lipid A biosynthesis. In terms of biological role, catalyzes the N-acylation of UDP-3-O-acylglucosamine using 3-hydroxyacyl-ACP as the acyl donor. Is involved in the biosynthesis of lipid A, a phosphorylated glycolipid that anchors the lipopolysaccharide to the outer membrane of the cell. The protein is UDP-3-O-acylglucosamine N-acyltransferase of Paraburkholderia phymatum (strain DSM 17167 / CIP 108236 / LMG 21445 / STM815) (Burkholderia phymatum).